The following is a 407-amino-acid chain: Chorismate synthase (407 aa).

Arginine 40 and arginine 46 together coordinate NADP(+). FMN contacts are provided by residues 138–140 (RAS) and 259–260 (QA). A compositionally biased stretch (basic and acidic residues) spans 275–284 (RRGSRAHDEM). A disordered region spans residues 275–308 (RRGSRAHDEMYPGTDGVVRSTNRAGGLEGGMTNG). Residues glycine 303, 318–322 (KPIST), and arginine 344 each bind FMN.

The protein belongs to the chorismate synthase family. Homotetramer. The cofactor is FMNH2.

The catalysed reaction is 5-O-(1-carboxyvinyl)-3-phosphoshikimate = chorismate + phosphate. It participates in metabolic intermediate biosynthesis; chorismate biosynthesis; chorismate from D-erythrose 4-phosphate and phosphoenolpyruvate: step 7/7. Catalyzes the anti-1,4-elimination of the C-3 phosphate and the C-6 proR hydrogen from 5-enolpyruvylshikimate-3-phosphate (EPSP) to yield chorismate, which is the branch point compound that serves as the starting substrate for the three terminal pathways of aromatic amino acid biosynthesis. This reaction introduces a second double bond into the aromatic ring system. The protein is Chorismate synthase of Mycobacterium ulcerans (strain Agy99).